We begin with the raw amino-acid sequence, 363 residues long: Ribonuclease P protein subunit p40 (363 aa).

Component of nuclear RNase P and RNase MRP ribonucleoproteins. RNase P consists of a catalytic RNA moiety and about 10 protein subunits; POP1, POP4, POP5, POP7, RPP14, RPP21, RPP25, RPP30, RPP38 and RPP40. Within the RNase P complex, POP1, POP7 and RPP25 form the 'finger' subcomplex, POP5, RPP14, RPP40 and homodimeric RPP30 form the 'palm' subcomplex, and RPP21, POP4 and RPP38 form the 'wrist' subcomplex. All subunits of the RNase P complex interact with the catalytic RNA. Several subunits of RNase P are also part of the RNase MRP complex. RNase MRP consists of a catalytic RNA moiety and about 8 protein subunits; POP1, POP7, RPP25, RPP30, RPP38, RPP40 and possibly also POP4 and POP5.

It localises to the nucleus. Its subcellular location is the nucleolus. In terms of biological role, component of ribonuclease P, a ribonucleoprotein complex that generates mature tRNA molecules by cleaving their 5'-ends. Also a component of the MRP ribonuclease complex, which cleaves pre-rRNA sequences. The polypeptide is Ribonuclease P protein subunit p40 (Rpp40) (Mus musculus (Mouse)).